A 176-amino-acid polypeptide reads, in one-letter code: KxDL motif-containing protein 1 (176 aa).

The residue at position 1 (methionine 1) is an N-acetylmethionine. The segment at 95–176 (HPEAFSHIPE…HTDDEEMPGE (82 aa)) is disordered. Over residues 119–131 (STTTTIATSEQST) the composition is skewed to low complexity. The segment covering 132–145 (GSCDTSPDTVSPSL) has biased composition (polar residues).

This sequence belongs to the KXD1 family. Component of the BLOC-one-related complex (BORC) which is composed of BLOC1S1, BLOC1S2, BORCS5, BORCS6, BORCS7, BORCS8, KXD1 and SNAPIN. Associates with the BLOC-1 complex. Interacts with BLOC1S1. Interacts with DTNBP1/BLOC1S7 (via coiled-coil domain).

The protein localises to the lysosome membrane. As part of the BORC complex may play a role in lysosomes movement and localization at the cell periphery. Associated with the cytosolic face of lysosomes, the BORC complex may recruit ARL8B and couple lysosomes to microtubule plus-end-directed kinesin motor. May also be involved in the biogenesis of lysosome-related organelles such as melanosomes. The chain is KxDL motif-containing protein 1 (KXD1) from Bos taurus (Bovine).